Reading from the N-terminus, the 160-residue chain is Negative modulator of initiation of replication (160 aa).

This sequence belongs to the SeqA family. As to quaternary structure, homodimer. Polymerizes to form helical filaments.

The protein localises to the cytoplasm. In terms of biological role, negative regulator of replication initiation, which contributes to regulation of DNA replication and ensures that replication initiation occurs exactly once per chromosome per cell cycle. Binds to pairs of hemimethylated GATC sequences in the oriC region, thus preventing assembly of replication proteins and re-initiation at newly replicated origins. Repression is relieved when the region becomes fully methylated. In Idiomarina loihiensis (strain ATCC BAA-735 / DSM 15497 / L2-TR), this protein is Negative modulator of initiation of replication.